We begin with the raw amino-acid sequence, 246 residues long: Purine nucleoside phosphorylase ORF3 (246 aa).

The Zn(2+) site is built by histidine 71, cysteine 110, and histidine 127.

This sequence belongs to the purine nucleoside phosphorylase YfiH/LACC1 family. In terms of assembly, homodimer. Requires Cu(2+) as cofactor. The cofactor is Zn(2+).

It carries out the reaction adenosine + phosphate = alpha-D-ribose 1-phosphate + adenine. The enzyme catalyses S-methyl-5'-thioadenosine + phosphate = 5-(methylsulfanyl)-alpha-D-ribose 1-phosphate + adenine. It catalyses the reaction inosine + phosphate = alpha-D-ribose 1-phosphate + hypoxanthine. The catalysed reaction is adenosine + H2O + H(+) = inosine + NH4(+). Functionally, purine nucleoside enzyme that catalyzes the phosphorolysis of adenosine and inosine nucleosides, yielding D-ribose 1-phosphate and the respective free bases, adenine and hypoxanthine. Also catalyzes the phosphorolysis of S-methyl-5'-thioadenosine into adenine and S-methyl-5-thio-alpha-D-ribose 1-phosphate. Also has adenosine deaminase activity. This chain is Purine nucleoside phosphorylase ORF3, found in Streptomyces griseus.